Reading from the N-terminus, the 273-residue chain is Shikimate dehydrogenase (NADP(+)) (273 aa).

Residues 14-16 and T61 each bind shikimate; that span reads SKS. The active-site Proton acceptor is K65. An NADP(+)-binding site is contributed by D77. Shikimate contacts are provided by N86 and D102. NADP(+)-binding positions include 127–131, 151–156, and M215; these read GAGGA and NRTGAR. Y217 provides a ligand contact to shikimate. Position 239 (G239) interacts with NADP(+).

The protein belongs to the shikimate dehydrogenase family. As to quaternary structure, homodimer.

It catalyses the reaction shikimate + NADP(+) = 3-dehydroshikimate + NADPH + H(+). Its pathway is metabolic intermediate biosynthesis; chorismate biosynthesis; chorismate from D-erythrose 4-phosphate and phosphoenolpyruvate: step 4/7. In terms of biological role, involved in the biosynthesis of the chorismate, which leads to the biosynthesis of aromatic amino acids. Catalyzes the reversible NADPH linked reduction of 3-dehydroshikimate (DHSA) to yield shikimate (SA). This is Shikimate dehydrogenase (NADP(+)) from Thioalkalivibrio sulfidiphilus (strain HL-EbGR7).